A 344-amino-acid polypeptide reads, in one-letter code: uncharacterized protein (344 aa).

The interval 190-232 (SGKRVRSAKKSGADAARASEGATCDRASSESVSPTARPPAQAS) is disordered.

This is an uncharacterized protein from Treponema pallidum (strain Nichols).